The primary structure comprises 98 residues: NADH-ubiquinone oxidoreductase chain 4L (98 aa).

3 consecutive transmembrane segments (helical) span residues 2 to 22 (TPIF…TLIF), 29 to 49 (SLLC…LIIL), and 61 to 81 (ILLL…LVMV).

The protein belongs to the complex I subunit 4L family. Core subunit of respiratory chain NADH dehydrogenase (Complex I) which is composed of 45 different subunits.

It is found in the mitochondrion inner membrane. It carries out the reaction a ubiquinone + NADH + 5 H(+)(in) = a ubiquinol + NAD(+) + 4 H(+)(out). Core subunit of the mitochondrial membrane respiratory chain NADH dehydrogenase (Complex I) which catalyzes electron transfer from NADH through the respiratory chain, using ubiquinone as an electron acceptor. Part of the enzyme membrane arm which is embedded in the lipid bilayer and involved in proton translocation. The sequence is that of NADH-ubiquinone oxidoreductase chain 4L (MT-ND4L) from Avahi cleesei (Cleese's woolly lemur).